Reading from the N-terminus, the 72-residue chain is uncharacterized protein (72 aa).

The protein belongs to the asfivirus I73R family.

It localises to the virion. This is an uncharacterized protein from African swine fever virus (isolate Warthog/Namibia/Wart80/1980) (ASFV).